The primary structure comprises 357 residues: GDP-mannose transporter 2 (357 aa).

The Cytoplasmic portion of the chain corresponds to 1 to 33; sequence MASARNGVSKDELLPVYERRSQRDGDISGSVKS. Residues 34–54 traverse the membrane as a helical segment; the sequence is FASTIGNSASAAVLAYCLSSI. Residues 55-68 are Lumenal-facing; the sequence is SMTLVNKYVVSGAS. A helical transmembrane segment spans residues 69–89; that stretch reads WNLSFLYLAMQSFIGTVAILA. At 90–107 the chain is on the cytoplasmic side; it reads CKKTGLIQNLALFDLKKA. A helical transmembrane segment spans residues 108–128; it reads QTWLPISLLLVGMIYTGNKAL. Residue Gln129 is a topological domain, lumenal. The chain crosses the membrane as a helical span at residues 130 to 150; it reads FLSVPVYTIFKNLTIIVIAYG. Residues 151 to 161 lie on the Cytoplasmic side of the membrane; the sequence is EVLMVGGGVKP. The chain crosses the membrane as a helical span at residues 162 to 181; the sequence is LALLSFGLMVLSSVVAAWAD. The Lumenal portion of the chain corresponds to 182–196; that stretch reads IQNATTATVGASSDS. The N-linked (GlcNAc...) asparagine glycan is linked to Asn184. The chain crosses the membrane as a helical span at residues 197-217; sequence TAAALSALNAGYAWMGTNVIF. The Cytoplasmic portion of the chain corresponds to 218–236; that stretch reads SASYALGMRRVIKKTNFDN. The helical transmembrane segment at 237–257 threads the bilayer; sequence WDVMFYNNLLSIPILLLASVL. Residues 258-277 are Lumenal-facing; sequence AEDWSSENLQRNFPAELRQS. A helical transmembrane segment spans residues 278–298; it reads LFIGILYSGVAAVFISYCTAW. The Cytoplasmic segment spans residues 299-306; it reads CVRATSST. Residues 307–327 traverse the membrane as a helical segment; it reads TYAMVGALNKLPLAVAGIVFF. At 328-332 the chain is on the lumenal side; that stretch reads AAPVT. The chain crosses the membrane as a helical span at residues 333 to 352; it reads FGSVSAIVLGFISGLVYARA. The Cytoplasmic portion of the chain corresponds to 353 to 357; that stretch reads KSTGA.

It belongs to the TPT transporter family. SLC35D subfamily. In terms of assembly, homooligomer.

The protein localises to the golgi apparatus membrane. It localises to the cytoplasmic vesicle membrane. Its subcellular location is the endoplasmic reticulum membrane. Its function is as follows. Involved in the import of GDP-mannose from the cytoplasm into the Golgi lumen. This is GDP-mannose transporter 2 (gmt2) from Neosartorya fischeri (strain ATCC 1020 / DSM 3700 / CBS 544.65 / FGSC A1164 / JCM 1740 / NRRL 181 / WB 181) (Aspergillus fischerianus).